We begin with the raw amino-acid sequence, 295 residues long: Perivine-Nbeta-methyltransferase (295 aa).

The segment at 76–85 is SAM motif I; that stretch reads ILDVGCGKGG. Residues 138 to 144 carry the Vacuolar targeting signal motif; sequence DGSFELI. Residues 139–147 are SAM motif II; that stretch reads GSFELIFVI. The interval 166–175 is SAM motif III; the sequence is VAAPGAQIVI.

Belongs to the class I-like SAM-binding methyltransferase superfamily. gTMT family. As to quaternary structure, homodimer. Mainly expressed in young leaves, and, to a lower extent, in mature leaves, flowers, stems and roots (at protein level). Transcripts levels are highest in flowers, moderate in leaves and low in roots and stems.

It is found in the vacuole membrane. It carries out the reaction perivine + S-adenosyl-L-methionine = vobasine + S-adenosyl-L-homocysteine + 2 H(+). The protein operates within alkaloid biosynthesis; vindoline biosynthesis. S-adenosyl-L-methionine-dependent N-methyltransferase involved in the biosynthesis of biologically active monoterpenoid indole alkaloids (MIAs) natural products including vindoline. Catalyzes the conversion of perivine to Nbeta-methylperivine (vobasine) by methylating its N4 nitrogen. Inactive with picrinine as substrate. This chain is Perivine-Nbeta-methyltransferase, found in Catharanthus roseus (Madagascar periwinkle).